The following is a 279-amino-acid chain: Pantothenate synthetase (279 aa).

26 to 33 contributes to the ATP binding site; that stretch reads MGNLHEGH. H33 serves as the catalytic Proton donor. Residue Q57 participates in (R)-pantoate binding. Residue Q57 participates in beta-alanine binding. 144–147 is a binding site for ATP; the sequence is GKKD. A (R)-pantoate-binding site is contributed by Q150. ATP contacts are provided by residues V173 and 181 to 184; that span reads LSSR.

It belongs to the pantothenate synthetase family. As to quaternary structure, homodimer.

Its subcellular location is the cytoplasm. It carries out the reaction (R)-pantoate + beta-alanine + ATP = (R)-pantothenate + AMP + diphosphate + H(+). It functions in the pathway cofactor biosynthesis; (R)-pantothenate biosynthesis; (R)-pantothenate from (R)-pantoate and beta-alanine: step 1/1. Catalyzes the condensation of pantoate with beta-alanine in an ATP-dependent reaction via a pantoyl-adenylate intermediate. The polypeptide is Pantothenate synthetase (Burkholderia cenocepacia (strain ATCC BAA-245 / DSM 16553 / LMG 16656 / NCTC 13227 / J2315 / CF5610) (Burkholderia cepacia (strain J2315))).